A 635-amino-acid chain; its full sequence is 1-deoxy-D-xylulose-5-phosphate synthase (635 aa).

Residues His-76 and Gly-117 to Ser-119 contribute to the thiamine diphosphate site. Residue Asp-148 participates in Mg(2+) binding. Residues Gly-149–Ala-150, Asn-177, Tyr-294, and Glu-379 contribute to the thiamine diphosphate site. Mg(2+) is bound at residue Asn-177.

Belongs to the transketolase family. DXPS subfamily. As to quaternary structure, homodimer. It depends on Mg(2+) as a cofactor. Thiamine diphosphate is required as a cofactor.

It catalyses the reaction D-glyceraldehyde 3-phosphate + pyruvate + H(+) = 1-deoxy-D-xylulose 5-phosphate + CO2. The protein operates within metabolic intermediate biosynthesis; 1-deoxy-D-xylulose 5-phosphate biosynthesis; 1-deoxy-D-xylulose 5-phosphate from D-glyceraldehyde 3-phosphate and pyruvate: step 1/1. Its function is as follows. Catalyzes the acyloin condensation reaction between C atoms 2 and 3 of pyruvate and glyceraldehyde 3-phosphate to yield 1-deoxy-D-xylulose-5-phosphate (DXP). This Neisseria meningitidis serogroup C (strain 053442) protein is 1-deoxy-D-xylulose-5-phosphate synthase.